Reading from the N-terminus, the 283-residue chain is Elongation factor Ts (283 aa).

The tract at residues 80 to 83 is involved in Mg(2+) ion dislocation from EF-Tu; it reads TDFV.

Belongs to the EF-Ts family.

It localises to the cytoplasm. Its function is as follows. Associates with the EF-Tu.GDP complex and induces the exchange of GDP to GTP. It remains bound to the aminoacyl-tRNA.EF-Tu.GTP complex up to the GTP hydrolysis stage on the ribosome. This chain is Elongation factor Ts, found in Histophilus somni (strain 129Pt) (Haemophilus somnus).